We begin with the raw amino-acid sequence, 227 residues long: Uridylate kinase (227 aa).

7–11 (KISGK) is an ATP binding site. Position 44 (Gly44) interacts with UMP. 2 residues coordinate ATP: Gly45 and Arg49. Residues Asp66 and 114-120 (FQPGQST) contribute to the UMP site. 4 residues coordinate ATP: Thr140, Asn141, Tyr146, and Asp149.

Belongs to the UMP kinase family. As to quaternary structure, homohexamer.

It is found in the cytoplasm. It carries out the reaction UMP + ATP = UDP + ADP. It participates in pyrimidine metabolism; CTP biosynthesis via de novo pathway; UDP from UMP (UMPK route): step 1/1. Unlike most bacteria, is not activated by GTP. UTP acts as a competitive inhibitor against both substrates. High concentration of UMP abolishes the inhibition of UTP at low ATP concentrations, indicating that UTP binds to the acceptor site (UMP site). Catalyzes the reversible phosphorylation of UMP to UDP, with ATP as the most efficient phosphate donor. Is also able to phosphorylate dUMP, although much less efficiently. This is Uridylate kinase (pyrH) from Saccharolobus solfataricus (strain ATCC 35092 / DSM 1617 / JCM 11322 / P2) (Sulfolobus solfataricus).